We begin with the raw amino-acid sequence, 398 residues long: Lipoyl synthase, mitochondrial (398 aa).

Residues 1–32 (MIALRVHNTRVVSRSLTVWTRPSPTLTLSRSL) constitute a mitochondrion transit peptide. [4Fe-4S] cluster is bound by residues Cys-117, Cys-122, Cys-128, Cys-147, Cys-151, Cys-154, and Ser-362. The 220-residue stretch at 132–351 (KKSEATATIM…RDTALEMGFL (220 aa)) folds into the Radical SAM core domain.

This sequence belongs to the radical SAM superfamily. Lipoyl synthase family. It depends on [4Fe-4S] cluster as a cofactor.

The protein resides in the mitochondrion. It carries out the reaction [[Fe-S] cluster scaffold protein carrying a second [4Fe-4S](2+) cluster] + N(6)-octanoyl-L-lysyl-[protein] + 2 oxidized [2Fe-2S]-[ferredoxin] + 2 S-adenosyl-L-methionine + 4 H(+) = [[Fe-S] cluster scaffold protein] + N(6)-[(R)-dihydrolipoyl]-L-lysyl-[protein] + 4 Fe(3+) + 2 hydrogen sulfide + 2 5'-deoxyadenosine + 2 L-methionine + 2 reduced [2Fe-2S]-[ferredoxin]. It functions in the pathway protein modification; protein lipoylation via endogenous pathway; protein N(6)-(lipoyl)lysine from octanoyl-[acyl-carrier-protein]: step 2/2. In terms of biological role, catalyzes the radical-mediated insertion of two sulfur atoms into the C-6 and C-8 positions of the octanoyl moiety bound to the lipoyl domains of lipoate-dependent enzymes, thereby converting the octanoylated domains into lipoylated derivatives. In Scheffersomyces stipitis (strain ATCC 58785 / CBS 6054 / NBRC 10063 / NRRL Y-11545) (Yeast), this protein is Lipoyl synthase, mitochondrial.